The sequence spans 259 residues: Glutamate racemase (259 aa).

Substrate-binding positions include 12-13 (DS) and 44-45 (YG). Residue Cys-75 is the Proton donor/acceptor of the active site. 76-77 (NT) lines the substrate pocket. The active-site Proton donor/acceptor is the Cys-186. 187 to 188 (TH) serves as a coordination point for substrate.

This sequence belongs to the aspartate/glutamate racemases family.

The catalysed reaction is L-glutamate = D-glutamate. The protein operates within cell wall biogenesis; peptidoglycan biosynthesis. In terms of biological role, provides the (R)-glutamate required for cell wall biosynthesis. In Clostridium novyi (strain NT), this protein is Glutamate racemase.